Here is a 933-residue protein sequence, read N- to C-terminus: MQNSALKAWLDSSYLSGANQSWIEQLYEDFLTDPDSVDANWRSTFQQLPGTGVKPDQFHSQTREYFRRLAKDASRYSSTISDPDTNVKQVKVLQLINAYRFRGHQHANLDPLGLWQQDKVADLDPSFHDLTEADFQETFNVGSFASGKETMKLGELLEALKQTYCGPIGAEYMHITSTEEKRWIQQRIESGRATFNSEEKKRFLSELTAAEGLERYLGAKFPGAKRFSLEGGDALIPMLKEMIRHAGNSGTREVVLGMAHRGRLNVLVNVLGKKPQDLFDEFAGKHKEHLGTGDVKYHMGFSSDFQTDGGLVHLALAFNPSHLEIVSPVVIGSVRARLDRLDEPSSNKVLPITIHGDAAVTGQGVVQETLNMSKARGYEVGGTVRIVINNQVGFTTSNPLDARSTPYCTDIGKMVQAPIFHVNADDPEAVAFVTRLALDFRNTFKRDVFIDLVCYRRHGHNEADEPSATQPLMYQKIKKHPTPRKIYADKLEQEKVATLEDATEMVNLYRDALDAGDCVVAEWRPMNMHSFTWSPYLNHEWDEEYPNKVEMKRLQELAKRISTVPEAVEMQSRVAKIYGDRQAMAAGEKLFDWGGAENLAYATLVDEGIPVRLSGEDSGRGTFFHRHAVIHNQSNGSTYTPLQHIHNGQGAFRVWDSVLSEEAVLAFEYGYATAEPRTLTIWEAQFGDFANGAQVVIDQFISSGEQKWGRMCGLVMLLPHGYEGQGPEHSSARLERYLQLCAEQNMQVCVPSTPAQVYHMLRRQALRGMRRPLVVMSPKSLLRHPLAVSSLEELANGTFLPAIGEIDELDPKGVKRVVMCSGKVYYDLLEQRRKNNQHDVAIVRIEQLYPFPHKAMQEVLQQFAHVKDFVWCQEEPLNQGAWYCSQHHFREVIPFGASLRYAGRPASASPAVGYMSVHQKQQQDLVNDALNVE.

It belongs to the alpha-ketoglutarate dehydrogenase family. As to quaternary structure, homodimer. Part of the 2-oxoglutarate dehydrogenase (OGDH) complex composed of E1 (2-oxoglutarate dehydrogenase), E2 (dihydrolipoamide succinyltransferase) and E3 (dihydrolipoamide dehydrogenase); the complex contains multiple copies of the three enzymatic components (E1, E2 and E3). Interacts (via N-terminus) with SucB, the E2 component of OGDH complex. The cofactor is thiamine diphosphate.

The catalysed reaction is N(6)-[(R)-lipoyl]-L-lysyl-[protein] + 2-oxoglutarate + H(+) = N(6)-[(R)-S(8)-succinyldihydrolipoyl]-L-lysyl-[protein] + CO2. In terms of biological role, E1 component of the 2-oxoglutarate dehydrogenase (OGDH) complex which catalyzes the decarboxylation of 2-oxoglutarate, the first step in the conversion of 2-oxoglutarate to succinyl-CoA and CO(2). The sequence is that of 2-oxoglutarate dehydrogenase E1 component (sucA) from Escherichia coli O157:H7.